The following is a 373-amino-acid chain: Chaperone protein DnaJ (373 aa).

The J domain maps to 5-70; the sequence is DYYEVLGLQK…EKKSNYDQFG (66 aa). The CR-type zinc-finger motif lies at 132–214; sequence GVEKEITVNR…CRGNGNVRKT (83 aa). Zn(2+)-binding residues include Cys145, Cys148, Cys162, Cys165, Cys188, Cys191, Cys202, and Cys205. CXXCXGXG motif repeat units follow at residues 145–152, 162–169, 188–195, and 202–209; these read CEHCNGSG, CPTCSGTG, CDRCSGTG, and CTHCRGNG.

The protein belongs to the DnaJ family. As to quaternary structure, homodimer. Requires Zn(2+) as cofactor.

The protein resides in the cytoplasm. Its function is as follows. Participates actively in the response to hyperosmotic and heat shock by preventing the aggregation of stress-denatured proteins and by disaggregating proteins, also in an autonomous, DnaK-independent fashion. Unfolded proteins bind initially to DnaJ; upon interaction with the DnaJ-bound protein, DnaK hydrolyzes its bound ATP, resulting in the formation of a stable complex. GrpE releases ADP from DnaK; ATP binding to DnaK triggers the release of the substrate protein, thus completing the reaction cycle. Several rounds of ATP-dependent interactions between DnaJ, DnaK and GrpE are required for fully efficient folding. Also involved, together with DnaK and GrpE, in the DNA replication of plasmids through activation of initiation proteins. This chain is Chaperone protein DnaJ, found in Clostridium botulinum (strain Alaska E43 / Type E3).